Reading from the N-terminus, the 349-residue chain is S-adenosylmethionine:tRNA ribosyltransferase-isomerase (349 aa).

Belongs to the QueA family. Monomer.

The protein localises to the cytoplasm. It carries out the reaction 7-aminomethyl-7-carbaguanosine(34) in tRNA + S-adenosyl-L-methionine = epoxyqueuosine(34) in tRNA + adenine + L-methionine + 2 H(+). It participates in tRNA modification; tRNA-queuosine biosynthesis. Its function is as follows. Transfers and isomerizes the ribose moiety from AdoMet to the 7-aminomethyl group of 7-deazaguanine (preQ1-tRNA) to give epoxyqueuosine (oQ-tRNA). This Pseudomonas putida (strain W619) protein is S-adenosylmethionine:tRNA ribosyltransferase-isomerase.